We begin with the raw amino-acid sequence, 525 residues long: GMP synthase [glutamine-hydrolyzing] (525 aa).

The Glutamine amidotransferase type-1 domain maps to 9–207 (RILILDFGSQ…VMDICKCEKL (199 aa)). The Nucleophile role is filled by cysteine 86. Catalysis depends on residues histidine 181 and glutamate 183. One can recognise a GMPS ATP-PPase domain in the interval 208-400 (WTAGAIIEDA…LGLPYDMLYR (193 aa)). 235–241 (SGGVDSS) lines the ATP pocket.

In terms of assembly, homodimer.

The enzyme catalyses XMP + L-glutamine + ATP + H2O = GMP + L-glutamate + AMP + diphosphate + 2 H(+). The protein operates within purine metabolism; GMP biosynthesis; GMP from XMP (L-Gln route): step 1/1. Functionally, catalyzes the synthesis of GMP from XMP. This is GMP synthase [glutamine-hydrolyzing] from Alteromonas mediterranea (strain DSM 17117 / CIP 110805 / LMG 28347 / Deep ecotype).